Consider the following 466-residue polypeptide: ATP-dependent protease ATPase subunit HslU (466 aa).

ATP-binding positions include Ile-18, 60–65 (GVGKTE), Asp-279, Glu-344, and Arg-416.

Belongs to the ClpX chaperone family. HslU subfamily. As to quaternary structure, a double ring-shaped homohexamer of HslV is capped on each side by a ring-shaped HslU homohexamer. The assembly of the HslU/HslV complex is dependent on binding of ATP.

It is found in the cytoplasm. Functionally, ATPase subunit of a proteasome-like degradation complex; this subunit has chaperone activity. The binding of ATP and its subsequent hydrolysis by HslU are essential for unfolding of protein substrates subsequently hydrolyzed by HslV. HslU recognizes the N-terminal part of its protein substrates and unfolds these before they are guided to HslV for hydrolysis. The sequence is that of ATP-dependent protease ATPase subunit HslU from Lactobacillus acidophilus (strain ATCC 700396 / NCK56 / N2 / NCFM).